The sequence spans 111 residues: Iron-sulfur cluster insertion protein ErpA (111 aa).

3 residues coordinate iron-sulfur cluster: cysteine 39, cysteine 103, and cysteine 105.

The protein belongs to the HesB/IscA family. In terms of assembly, homodimer. Iron-sulfur cluster serves as cofactor.

Its function is as follows. Required for insertion of 4Fe-4S clusters for at least IspG. The chain is Iron-sulfur cluster insertion protein ErpA from Acinetobacter baumannii (strain SDF).